A 112-amino-acid chain; its full sequence is Urease subunit beta (112 aa).

This sequence belongs to the urease beta subunit family. In terms of assembly, heterotrimer of UreA (gamma), UreB (beta) and UreC (alpha) subunits. Three heterotrimers associate to form the active enzyme.

It is found in the cytoplasm. The enzyme catalyses urea + 2 H2O + H(+) = hydrogencarbonate + 2 NH4(+). It participates in nitrogen metabolism; urea degradation; CO(2) and NH(3) from urea (urease route): step 1/1. The sequence is that of Urease subunit beta from Thioalkalivibrio sulfidiphilus (strain HL-EbGR7).